The chain runs to 62 residues: UPF0434 protein ABO_2103 (62 aa).

This sequence belongs to the UPF0434 family.

This chain is UPF0434 protein ABO_2103, found in Alcanivorax borkumensis (strain ATCC 700651 / DSM 11573 / NCIMB 13689 / SK2).